The chain runs to 389 residues: Mesotocin receptor (389 aa).

Residues 1–50 (MEGLCLNLDCSELPNSSWVNSSMENQNHSSNSTRDPLKRNEEVAKVEVTV) lie on the Extracellular side of the membrane. Asn15, Asn20, Asn27, and Asn31 each carry an N-linked (GlcNAc...) asparagine glycan. The helical transmembrane segment at 51–71 (LALILFLALAGNICVLLGIYI) threads the bilayer. The Cytoplasmic portion of the chain corresponds to 72–87 (NRHKHSRMYFFMKHLS). Residues 88–108 (IADLVVAIFQVLPQLIWDITF) traverse the membrane as a helical segment. At 109–119 (RFYAPDLVCRL) the chain is on the extracellular side. Cysteines 117 and 192 form a disulfide. Residues 120 to 140 (VTYLQVVGMFASTYMLLLMSL) form a helical membrane-spanning segment. The Cytoplasmic segment spans residues 141–159 (DRCLAICQPLRSLHRRSDC). The chain crosses the membrane as a helical span at residues 160–180 (VYVLFTWILSFLLSTPQTVIF). Residues 181–207 (SLTEVGNGVYDCRADFIQPWGPKAYIT) lie on the Extracellular side of the membrane. Residues 208 to 228 (WITLAVYIIPVMILSVCYGLI) traverse the membrane as a helical segment. At 229 to 275 (SYKIWQNIRLKTVCESNLRLSTSRRATLSRVSSVRLISKAKIRTVKM) the chain is on the cytoplasmic side. The helical transmembrane segment at 276 to 296 (TFIIVLAYIVCWTPFFFVQMW) threads the bilayer. At 297-308 (SVWDPNPPKEAS) the chain is on the extracellular side. The helical transmembrane segment at 309–329 (LFIIAMLLGSLNSCCNPWIYM) threads the bilayer. Over 330–389 (LFTGHLFHDLLQSFLCCSARYLKTQQQGSDLSASRKSNSSTFVLSRKSSSQKSITQPSTA) the chain is Cytoplasmic. The disordered stretch occupies residues 360–389 (LSASRKSNSSTFVLSRKSSSQKSITQPSTA).

It belongs to the G-protein coupled receptor 1 family. Vasopressin/oxytocin receptor subfamily. Highly expressed in the bladder. Also expressed in kidney, brain and skeletal muscle.

It is found in the cell membrane. In terms of biological role, binds to mesotocin and may play a role in the regulation of water and salt transport. This chain is Mesotocin receptor, found in Rhinella marina (Cane toad).